A 228-amino-acid polypeptide reads, in one-letter code: Octanoyltransferase (228 aa).

A BPL/LPL catalytic domain is found at 40–225 (GEEAERVWLV…SFERVFDAAP (186 aa)). Substrate is bound by residues 79–86 (RGGQWTYH), 156–158 (AIG), and 169–171 (GIA). Residue Cys-187 is the Acyl-thioester intermediate of the active site.

Belongs to the LipB family.

Its subcellular location is the cytoplasm. It carries out the reaction octanoyl-[ACP] + L-lysyl-[protein] = N(6)-octanoyl-L-lysyl-[protein] + holo-[ACP] + H(+). It participates in protein modification; protein lipoylation via endogenous pathway; protein N(6)-(lipoyl)lysine from octanoyl-[acyl-carrier-protein]: step 1/2. Functionally, catalyzes the transfer of endogenously produced octanoic acid from octanoyl-acyl-carrier-protein onto the lipoyl domains of lipoate-dependent enzymes. Lipoyl-ACP can also act as a substrate although octanoyl-ACP is likely to be the physiological substrate. This Acidiphilium cryptum (strain JF-5) protein is Octanoyltransferase.